We begin with the raw amino-acid sequence, 1441 residues long: ABC transporter G family member 41 (1441 aa).

Over residues 1–14 the composition is skewed to basic and acidic residues; that stretch reads MEDKKQQQQQQREE. The interval 1-28 is disordered; sequence MEDKKQQQQQQREEAEAEEEAPVVPSSL. The ABC transporter 1 domain maps to 159 to 432; the sequence is ATARGLSRRP…FESCGFKCPE (274 aa). Residue 192 to 199 participates in ATP binding; sequence GPPGCGKT. The ABC transmembrane type-2 1 domain maps to 510–722; that stretch reads DLLKACFARE…AEIGLTGNEF (213 aa). 6 helical membrane-spanning segments follow: residues 528 to 548, 566 to 586, 600 to 620, 642 to 662, 672 to 692, and 758 to 778; these read FIYI…GTVF, SLFY…AIAV, FYPA…LSLV, FFCQ…LFRC, ASSV…GFII, and ASAL…GLTI. Residues 838-1090 form the ABC transporter 2 domain; sequence ISFQDVNYYV…NVIHYFETIP (253 aa). 883–890 is a binding site for ATP; sequence GVTGAGKT. One can recognise an ABC transmembrane type-2 2 domain in the interval 1163–1379; it reads EQLKACIWKQ…TLNVFFTTQF (217 aa). A run of 7 helical transmembrane segments spans residues 1187–1207, 1215–1235, 1272–1292, 1300–1320, 1329–1349, 1357–1377, and 1413–1433; these read ILFI…QGDI, GLFT…INNC, IPYV…MIGY, FWFM…GMMI, VASI…GFIV, WWIW…FFTT, and LAAI…GLSI.

Belongs to the ABC transporter superfamily. ABCG family. PDR (TC 3.A.1.205) subfamily.

The protein localises to the membrane. Its function is as follows. May be a general defense protein. In Oryza sativa subsp. japonica (Rice), this protein is ABC transporter G family member 41.